A 444-amino-acid polypeptide reads, in one-letter code: Transcriptional coactivator nsrH (444 aa).

Residues 74 to 144 (ASQVSEILAC…ERDHVAHTPL (71 aa)) enclose the HTH iclR-type domain. Positions 104-123 (IKDIADLTNVPESRLRRIIR) form a DNA-binding region, H-T-H motif.

It localises to the nucleus. In terms of biological role, transcriptional coactivator; part of the gene cluster that mediates the biosynthesis of the tetrahydroxanthone dimer neosartorin, which exhibits antibacterial activity. This Aspergillus novofumigatus (strain IBT 16806) protein is Transcriptional coactivator nsrH.